A 105-amino-acid polypeptide reads, in one-letter code: Ketoisovalerate oxidoreductase subunit VorD (105 aa).

2 4Fe-4S ferredoxin-type domains span residues phenylalanine 44–aspartate 73 and glycine 74–glutamate 103. Residues cysteine 53, cysteine 56, cysteine 59, cysteine 63, cysteine 83, cysteine 86, cysteine 89, and cysteine 93 each coordinate [4Fe-4S] cluster.

In terms of assembly, heterotetramer of one alpha, one beta, one delta and one gamma chain. The cofactor is [4Fe-4S] cluster.

It carries out the reaction 3-methyl-2-oxobutanoate + 2 oxidized [2Fe-2S]-[ferredoxin] + CoA = 2-methylpropanoyl-CoA + 2 reduced [2Fe-2S]-[ferredoxin] + CO2 + H(+). This Pyrococcus horikoshii (strain ATCC 700860 / DSM 12428 / JCM 9974 / NBRC 100139 / OT-3) protein is Ketoisovalerate oxidoreductase subunit VorD (vorD).